The sequence spans 600 residues: Integrator complex subunit 11 (600 aa).

Zn(2+) contacts are provided by His-68, His-70, Asp-72, His-73, His-157, and Asp-178. The short motif at His-68–His-73 is the HXHXDH motif element. Residue Glu-203 is part of the active site. Residue His-414 participates in Zn(2+) binding. A Nuclear localization signal motif is present at residues Leu-469 to Met-479.

The protein belongs to the metallo-beta-lactamase superfamily. RNA-metabolizing metallo-beta-lactamase-like family. INTS11 subfamily. In terms of assembly, component of the Integrator complex, composed of core subunits INTS1, INTS2, INTS3, INTS4, INTS5, INTS6, INTS7, INTS8, INTS9/RC74, INTS10, INTS11/CPSF3L, INTS12, INTS13, INTS14 and INTS15. The core complex associates with protein phosphatase 2A subunits PPP2CA and PPP2R1A, to form the Integrator-PP2A (INTAC) complex. INTS11 is part of the RNA endonuclease subcomplex, composed of INTS4, INTS9, INTS11 and inositol hexakisphosphate (InsP6). It depends on Zn(2+) as a cofactor.

The protein localises to the nucleus. It localises to the cytoplasm. Functionally, RNA endonuclease component of the integrator complex, a multiprotein complex that terminates RNA polymerase II (Pol II) transcription in the promoter-proximal region of genes. The integrator complex provides a quality checkpoint during transcription elongation by driving premature transcription termination of transcripts that are unfavorably configured for transcriptional elongation: the complex terminates transcription by (1) catalyzing dephosphorylation of the C-terminal domain (CTD) of Pol II subunit POLR2A/RPB1 and SUPT5H/SPT5, (2) degrading the exiting nascent RNA transcript via endonuclease activity and (3) promoting the release of Pol II from bound DNA. The integrator complex is also involved in terminating the synthesis of non-coding Pol II transcripts, such as enhancer RNAs (eRNAs), small nuclear RNAs (snRNAs), telomerase RNAs and long non-coding RNAs (lncRNAs). Within the integrator complex, INTS11 constitutes the RNA endonuclease subunit that degrades exiting nascent RNA transcripts. The protein is Integrator complex subunit 11 (INTS11) of Gallus gallus (Chicken).